A 203-amino-acid polypeptide reads, in one-letter code: Small ribosomal subunit protein uS4c (203 aa).

Residues 19–43 (PGLTNKSPKAGSDLRKQPRSRKKSQ) form a disordered region. In terms of domain architecture, S4 RNA-binding spans 89-152 (MRLDNILFRL…KSRTLIQNSL (64 aa)).

It belongs to the universal ribosomal protein uS4 family. Part of the 30S ribosomal subunit. Contacts protein S5. The interaction surface between S4 and S5 is involved in control of translational fidelity.

The protein resides in the plastid. Its subcellular location is the chloroplast. One of the primary rRNA binding proteins, it binds directly to 16S rRNA where it nucleates assembly of the body of the 30S subunit. In terms of biological role, with S5 and S12 plays an important role in translational accuracy. The polypeptide is Small ribosomal subunit protein uS4c (rps4) (Jasminum nudiflorum (Winter jasmine)).